A 373-amino-acid chain; its full sequence is MGSRLSLDGSVRVVVVGGGFGGTAAASLLKSWAVPFVLVDVRDAFHHNVAALRAAVESGFAKKTFISYSVTFGDSFRQGKVVAIDPGRQQVVLSDGEELHYSHLILATGSDGPFPGKFNQVIDMESAIQTYEDMVKEIEKSQRILVVGGGAAGVEMAAEIKTEYPGKEIILIHSKTALADVELLPSVRQVVKEILLRKGVRLLLSEKVSDIENLRPNQFQKDMVVRTEKGTEVVVDMVVLCTGIKINSSAYAAAFGDKMASDGALKVNKHLQLEGYENIYAIGDCADLKEPKMAYHAGLHANVVVTNIINSLTQKPLKTYEPGSLTFLLSMGRNDGVGQVNGYYVGRLLVTIAKSRDLFVSKSWRTMGQTMPS.

A lipid anchor (N-myristoyl glycine) is attached at Gly2. The helical transmembrane segment at 13-29 threads the bilayer; sequence VVVVGGGFGGTAAASLL. Residues 17-21, Arg53, and Val81 each bind 6-hydroxy-FAD; that span reads GGGFG. Lys167 carries the N6-acetyllysine modification. Asp284 serves as a coordination point for 6-hydroxy-FAD.

This sequence belongs to the FAD-dependent oxidoreductase family. The cofactor is 6-hydroxy-FAD. N-myristoylation at Gly-2 mediates the recruitment to lipid droplets and plasma membrane. Post-translationally, acetylation at Lys-167 prevents AIFM2 ubiquitination and degradation, thereby inhibiting ferroptosis. KAT2B mediates acetylation at Lys-167, while HDAC3 removes it. In terms of processing, ubiquitinated. AIFM2 undergoes 'Lys-29'-ubiquitination and proteasomal degradation, which is inhibited by acetylation at Lys-167.

It is found in the lipid droplet. Its subcellular location is the cell membrane. It localises to the cytoplasm. The protein resides in the mitochondrion membrane. The protein localises to the nucleus. The catalysed reaction is ubiquinone-10 + NADH + H(+) = ubiquinol-10 + NAD(+). The enzyme catalyses phylloquinone + NADH + H(+) = phylloquinol + NAD(+). It catalyses the reaction menaquinone-4 + NADH + H(+) = menaquinol-4 + NAD(+). It carries out the reaction menadione + NADH + H(+) = menadiol + NAD(+). The modification by 4-hydroxy-2-nonenal (HNE) adduction in mitochondria results in loss of the oxidoreductase activity and activation of a novel function in mitochondrial oxidative stress signaling. An NAD(P)H-dependent oxidoreductase that acts as a key inhibitor of ferroptosis. At the plasma membrane, catalyzes reduction of coenzyme Q/ubiquinone-10 to ubiquinol-10, a lipophilic radical-trapping antioxidant that prevents lipid oxidative damage and consequently ferroptosis. Acts in parallel to GPX4 to suppress phospholipid peroxidation and ferroptosis. This anti-ferroptotic function is independent of cellular glutathione levels. Also acts as a potent radical-trapping antioxidant by mediating warfarin-resistant vitamin K reduction in the canonical vitamin K cycle: catalyzes NAD(P)H-dependent reduction of vitamin K (phylloquinone, menaquinone-4 and menadione) to hydroquinone forms. Hydroquinones act as potent radical-trapping antioxidants inhibitor of phospholipid peroxidation and ferroptosis. May play a role in mitochondrial stress signaling. Upon oxidative stress, associates with the lipid peroxidation end product 4-hydroxy-2-nonenal (HNE) forming a lipid adduct devoid of oxidoreductase activity, which then translocates from mitochondria into the nucleus triggering DNA damage and cell death. The chain is Ferroptosis suppressor protein 1 (AIFM2) from Taeniopygia guttata (Zebra finch).